A 214-amino-acid chain; its full sequence is uncharacterized protein (214 aa).

The helical transmembrane segment at 10–30 threads the bilayer; it reads LLLAGIGGFMVGGLASWVVSS. Polar residues predominate over residues 147-157; sequence SSQANSQSTQP. The disordered stretch occupies residues 147-166; the sequence is SSQANSQSTQPRDPIPTENF.

It is found in the membrane. This is an uncharacterized protein from Schizosaccharomyces pombe (strain 972 / ATCC 24843) (Fission yeast).